Reading from the N-terminus, the 545-residue chain is Zona pellucida sperm-binding protein 4 (545 aa).

An N-terminal signal peptide occupies residues 1–28 (MARQALRSTLWLLPSILLCFPFCLPLSG). At 29 to 518 (QHVTELPGVL…HSGTHADSPT (490 aa)) the chain is on the extracellular side. N-linked (GlcNAc...) asparagine glycosylation is found at N50 and N74. In terms of domain architecture, P-type spans 148–192 (KVCSPVPVKERLPCASSTISRGDCEELGCCYSSEEEGADSCYYGN). The ZP domain occupies 197-471 (HCTKEGHFSI…PSCTVICPAS (275 aa)). N228 carries N-linked (GlcNAc...) asparagine glycosylation. O-linked (GalNAc...) threonine glycosylation occurs at T312. An N-linked (GlcNAc...) asparagine glycan is attached at N336. A disulfide bridge connects residues C377 and C451. A propeptide spans 472-545 (RRRRKSELYF…VSYLATRKQR (74 aa)) (removed in mature form). An N-linked (GlcNAc...) asparagine glycan is attached at N483. Residues 519–539 (LWVMGLSASMVITGVLVVSYL) traverse the membrane as a helical segment. The Cytoplasmic segment spans residues 540 to 545 (ATRKQR).

This sequence belongs to the ZP domain family. ZPB subfamily. In terms of processing, proteolytically cleaved before the transmembrane segment to yield the secreted ectodomain incorporated in the zona pellucida. Expressed in oocytes.

Its subcellular location is the zona pellucida. It localises to the cell membrane. Functionally, component of the zona pellucida, an extracellular matrix surrounding oocytes which mediates sperm binding, induction of the acrosome reaction and prevents post-fertilization polyspermy. The zona pellucida is composed of 3 to 4 glycoproteins, ZP1, ZP2, ZP3, and ZP4. ZP4 may act as a sperm receptor. This is Zona pellucida sperm-binding protein 4 (Zp4) from Rattus norvegicus (Rat).